The primary structure comprises 66 residues: Large ribosomal subunit protein bL31 (66 aa).

Zn(2+)-binding residues include Cys-16, Cys-18, Cys-36, and Cys-39.

The protein belongs to the bacterial ribosomal protein bL31 family. Type A subfamily. In terms of assembly, part of the 50S ribosomal subunit. It depends on Zn(2+) as a cofactor.

Functionally, binds the 23S rRNA. This chain is Large ribosomal subunit protein bL31, found in Sulfurimonas denitrificans (strain ATCC 33889 / DSM 1251) (Thiomicrospira denitrificans (strain ATCC 33889 / DSM 1251)).